Reading from the N-terminus, the 419-residue chain is Multidrug efflux pump Tap (419 aa).

The next 12 helical transmembrane spans lie at 7-29 (GPAFLILFATLMAAAGDGVSIVA), 44-66 (ASIVASATMLPLLFATLVAGTAV), 73-95 (RVSMVADALSGAAVAGVPLVAWG), 100-122 (AVNVLVLAVLAALAAAFGPAGMT), 149-171 (ILNLAFIVGPAIGGLMIATVGGI), 175-197 (WITATAFGLSILAIAALQLEGAG), 218-240 (FVWNLRVLRTLGMIDLTVTALYL), 260-282 (LGWALMAIAGGGLVGALGYAVLA), 289-308 (VTMSTAVLTLGLASMVIAFL), 313-335 (VIMVLCAVVGLVYGPIQPIYNYV), 348-370 (VVGVMTSLAYAAGPLGLLLAGPL), and 375-397 (GLHATFLALALPIVCTGLVAIRL).

It belongs to the major facilitator superfamily. Drug:H(+) antiporter-3 (DHA3) (TC 2.A.1.21) family.

It localises to the cell inner membrane. With respect to regulation, inhibited by piperine, verapamil and verapamil analogs. Its function is as follows. Efflux pump that contributes to intrinsic antibiotic resistance. The pump uses the electrochemical gradient as a source of energy. Confers resistance to rifampicin. Confers low-level resistance to tetracycline and to several aminoglycosides, including streptomycin, gentamicin, 2'-N-ethylnetilmicin and 6'-N-ethylnetilmicin. The protein is Multidrug efflux pump Tap of Mycobacterium tuberculosis (strain ATCC 25618 / H37Rv).